Reading from the N-terminus, the 288-residue chain is 33 kDa chaperonin (288 aa).

2 disulfides stabilise this stretch: C236–C238 and C269–C272.

The protein belongs to the HSP33 family. Post-translationally, under oxidizing conditions two disulfide bonds are formed involving the reactive cysteines. Under reducing conditions zinc is bound to the reactive cysteines and the protein is inactive.

Its subcellular location is the cytoplasm. In terms of biological role, redox regulated molecular chaperone. Protects both thermally unfolding and oxidatively damaged proteins from irreversible aggregation. Plays an important role in the bacterial defense system toward oxidative stress. The chain is 33 kDa chaperonin from Lactococcus lactis subsp. cremoris (strain SK11).